Reading from the N-terminus, the 887-residue chain is Pyruvate dehydrogenase E1 component (887 aa).

Homodimer. Part of the PDH complex, consisting of multiple copies of pyruvate dehydrogenase (E1), dihydrolipoamide acetyltransferase (E2) and lipoamide dehydrogenase (E3). Thiamine diphosphate serves as cofactor.

The enzyme catalyses N(6)-[(R)-lipoyl]-L-lysyl-[protein] + pyruvate + H(+) = N(6)-[(R)-S(8)-acetyldihydrolipoyl]-L-lysyl-[protein] + CO2. Functionally, component of the pyruvate dehydrogenase (PDH) complex, that catalyzes the overall conversion of pyruvate to acetyl-CoA and CO(2). This Buchnera aphidicola subsp. Acyrthosiphon pisum (strain APS) (Acyrthosiphon pisum symbiotic bacterium) protein is Pyruvate dehydrogenase E1 component (aceE).